We begin with the raw amino-acid sequence, 66 residues long: DNA-directed RNA polymerase subunit Rpo10 (66 aa).

4 residues coordinate Zn(2+): Cys7, Cys10, Cys44, and Cys45.

Belongs to the archaeal Rpo10/eukaryotic RPB10 RNA polymerase subunit family. In terms of assembly, part of the RNA polymerase complex. Requires Zn(2+) as cofactor.

Its subcellular location is the cytoplasm. It catalyses the reaction RNA(n) + a ribonucleoside 5'-triphosphate = RNA(n+1) + diphosphate. Its function is as follows. DNA-dependent RNA polymerase (RNAP) catalyzes the transcription of DNA into RNA using the four ribonucleoside triphosphates as substrates. In Pyrobaculum islandicum (strain DSM 4184 / JCM 9189 / GEO3), this protein is DNA-directed RNA polymerase subunit Rpo10.